Consider the following 163-residue polypeptide: E3 ubiquitin-protein ligase ATL23 (163 aa).

The helical transmembrane segment at 35–55 (ALLLPCVGMCIVFLIYLFLLW) threads the bilayer. Residues 104 to 146 (CAVCLEDIESGQSTRLVPGCNHGFHQLCADTWLSNHTVCPVCR) form an RING-type; atypical zinc finger.

It belongs to the RING-type zinc finger family. ATL subfamily.

It is found in the membrane. The enzyme catalyses S-ubiquitinyl-[E2 ubiquitin-conjugating enzyme]-L-cysteine + [acceptor protein]-L-lysine = [E2 ubiquitin-conjugating enzyme]-L-cysteine + N(6)-ubiquitinyl-[acceptor protein]-L-lysine.. The protein operates within protein modification; protein ubiquitination. In terms of biological role, E3 ubiquitin-protein ligase able to catalyze polyubiquitination with ubiquitin-conjugating enzyme E2 UBC8, UBC10, UBC11, UBC28 and UBC29 in vitro. The sequence is that of E3 ubiquitin-protein ligase ATL23 (ATL23) from Arabidopsis thaliana (Mouse-ear cress).